A 100-amino-acid polypeptide reads, in one-letter code: C-X-C motif chemokine 3 (100 aa).

Residues 1-31 (MAPPTCRLLSAALVLLLLLATNHQATGAVVA) form the signal peptide. Disulfide bonds link Cys36/Cys62 and Cys38/Cys78.

The protein belongs to the intercrine alpha (chemokine CxC) family.

The protein localises to the secreted. Its function is as follows. Ligand for CXCR2. Has chemotactic activity for neutrophils. May play a role in inflammation and exert its effects on endothelial cells in an autocrine fashion. This chain is C-X-C motif chemokine 3, found in Mus musculus (Mouse).